The following is a 134-amino-acid chain: Peroxisomal testis-specific protein 1 (134 aa).

Residues 131-134 carry the Microbody targeting signal motif; it reads NHLL.

It localises to the peroxisome. This chain is Peroxisomal testis-specific protein 1 (PXT1), found in Homo sapiens (Human).